The chain runs to 142 residues: Prefoldin subunit alpha 1 (142 aa).

This sequence belongs to the prefoldin subunit alpha family. Heterohexamer of two alpha and four beta subunits.

It localises to the cytoplasm. In terms of biological role, molecular chaperone capable of stabilizing a range of proteins. Seems to fulfill an ATP-independent, HSP70-like function in archaeal de novo protein folding. The protein is Prefoldin subunit alpha 1 (pfdA1) of Methanocaldococcus jannaschii (strain ATCC 43067 / DSM 2661 / JAL-1 / JCM 10045 / NBRC 100440) (Methanococcus jannaschii).